We begin with the raw amino-acid sequence, 6486 residues long: MKKQENIAKIYPLTPLQEGMLFHAVTDTGSSAYCLQMSATIEGDFHLPLFEKSLNKLVENYEVLRTAFVYQNMQRPRQVVFKERKVTVPCENIAHLPSAEQDAYIQAYTKQHHAFDLTKDNLMKAAIFQTAENKYRLVWAFHHIIVDGWTLGVLLHKLLTYYAALRKGEPIPREATKPYSEYIKWLDKQNKDEALAYWQNYLAGYDHQAAFPKKKLGTEASRYEHVEAMFTIAPEKTQQLIQIANQNQATMSSVFQALWGILASTYKNADDVVFGSVVSGRPPQIQGIESMVGLFINTIPTRVQTNKQQTFSELLQTVQKQALASATYDFAPLYEIQSTTVLKQELIDHLVTFENYPDHSMKHLEESLGFQFTVESGDEQTSYDLNVVVALAPSNELYVKLSYNAAVYESSFVNRIEGHLRTVIDQVIGNPHVHLHEIGIITEEEKQQLLVAYNDTAAEYPRDKTIFELIAEQASRTPAKAAVVCGEDTLTYQELMERSAQLANALREKGIASGSIVSIMAEHSLELIVAIMAVLRSGAAYLPIDPEYPQDRIQYLLDDSQTTLLLTQSHLQPNIRFAGSVLYLDDRSLYEGGSTSFAPESKPDDLAYMIYTSGSTGNPKGAMITHQGLVNYIWWANKVYVQGEAVDFPLYSSISFDLTVTSIFTPLLSGNTIHVYRGADKVQVILDIIKDNKVGIIKLTPTHLKLIEHIDGKASSIRRFIVGGENLPTKLAKQIYDHFGENVQIFNEYGPTETVVGCMIYLYDPQTTTQESVPIGVPADNVQLYLLDASMQPVPVGSLGEMYIAGDGVAKGYFNRPELTKEKFIDNPFRPGTKMYRTGDLAKWLPDGNMEYAGRMDYQVKIRGHRIEMGEIETRLTQHEAVKEAVVIVEKDESGQNVLYAYLVSERELTVAELREFLGRTLPSYMIPSFFIRLAEIPLTANGKVERKKLPKPAGAVVTGTAYAAPQNEIEAKLAEIWQQVLGISQVGIHDDFFDLGGHSLKAMTVVFQVSKALEVELPVKALFEHPTVAELARFLSRSEKTEYTAIQPVAAQEFYPVSSAQKRMYILQQFEGNGISYNISGAILLEGKLDYARFASAVQQLAERHEALRTSFHRIDGEPVQKVHEEVEVPLFMLEAPEDQAEKIMREFVRPFDLGVAPLMRTGLLKLGKDRHLFLLDMHHIISDGVSSQILLREFAELYQGADLQPLSLQYKDFAAWQNELFQTEAYKKQEQHWLNTFADEIPLLNLPTDYPRPSVQSFAGDLVLFAAGKELLERLQQVASETGTTLYMILLAAYNVLLSKYTGQEDIIVGTPVAGRSHADVENIMGIFVNTLALRNQPASSKTFAQFLQEVKQNALAAYDHQDYPFEELVEKLAIQRDISRNPLFDTLFSLENANQQSLAIAELTASPYELFNKISKFDLALNASESPADIQFQLTFATKLFKKETVERMARHYLEILRWISEQPTASLADIDMMTEAEKRTLLLNVNDTFVERTAATALHQLVEEQAARTPDEVAVVYEEYALTYRELNARANQLARLLRSHGTGPDTLIGIMVDRSPGMVVGMLAVLKAGGAYTPIDPSYPPERIQYMLSDSQAPILLTQRHLQELAAYQGEIIDVDEEAIYTGADTNLDNVAGKDDLAYVIYTSGSTGNPKGVMISHQAICNHMLWMRETFPLTTEDAVLQKTPFSFDASVWEFYLPLITGGQLVLAKPDGHRDIAYMTRLIRDEKITTLQMVPSLLDLVMTDPGWSACTSLQRVFCGGEALTPALVSRFYETQQAQLINLYGPTETTIDATYWPCPRQQEYSAIPIGKPIDNVRLYVVNASNQLQPVGVAGELCIAGDGLARGYWQREELTKASFVDNPFEPGGTMYRTGDMVRYLPDGHIEYLGRIDHQVKIRGHRIELGEIEATLLQHEAVKAVVVMARQDGKGQNSLYAYVVAEQDIQTAELRTYLSATLPAYMVPSAFVFLEQLPLSANGKVDRKALPQPEDAAASAAVYVAPRNEWEAKLAAIWESVLGVEPIGVHDHFFELGGHSLKAMHVISLLQRSFQVDVPLKVLFESPTIAGLAPLVAAARKGTYTAIPPVEKQEYYPVSAAQKRMFILQQMEGAGISYNMPGFMYLDGKLDTERLQQALKSLVQRHESLRTSFHSVQGETVQRVHDDVDLAISFGEATEAETRQIAEQFIQPFDLGTAPLLRAGLIKLAPERHLFMLDLHHIVVDGVSIGLLIEEFAQLYHGEELPALRIQYKDFAKWQQDWFQTEEFAEQEAYWLNTFTGEIPVLNLPTDYPRPSVKSFAGDRFVFGSGTALPKQLHQLAQETGTTLYMVLLAAYNVLLSKYSRQEDIIVGAPTAGRSHAETESIVGMFVNTLALRNEPAGGKTFRDFLAEVKINTLGAFEHQDYPLDELVDKLDMQRDLSRNPLFDTVFILQNMEQKPFEMEQLTITPYSAEVKQAKFDLSLEAYEENAEIIFSLDYSTKLFSRETIEKIATHFIQILRAVIAEPEMPLSEITMLTEAEKQRLLVDFNGAHKDFPQNKTLQALFEEQAEKSPQATAVEISGQPLSYQELNERANQLAATLRERGVQPDQPVGIMANRSVEMVVGILAILKAGGAYVPIDPEYPEERVAYMLTDCQARLVLTQKHLGAKLGSSVTAECLYLDDESNYGVHRSNLQPINTASDLAYIIYTSGTTGKPKGVMVEHRGIVNNVLWKKAEYQMKVGDRSLLSLSFAFDAFVLSFFTPVLSGATVVLAEDEEAKDPVSLKKLIAASRCTLMTGVPSLFQAILECSTPADIRPLQTVTLGGEKITAQLVEKCKQLNPDLVIVNEYGPTESSVVATWQRLAGPDAAITIGRPIANTSLYIVNQYHQLQPIGVVGEICIGGRGLARGYWNKPALTEEKFVSHPFAAGERMYKTGDLGKWLPDGTIEYIGRIDEQVKVRGYRIEIGEIESALLAAEKLTAAVVVVYEDQLGQSALAAYFTADEQLDVTKLWSHLSKRLPSYMIPAHFVQLDQLPLTPNGKVDKKALPKPEGKPVTEAQYVAPTNAVESKLAEIWERVLGVSGIGILDNFFQIGGHSLKAMAVAAQVHREYQVELPLKVLFAQPTIKALAQYVATSGKETYVPIEPAPLQEYYPVSSAQKRMYVLRQFADTGTVYNMPSALYIEGDLDRKRFEAAIHGLVERHESLRTSFHTVNGEPVQRVHEHVELNVQYAEVTEAQVEPTVESFVQAFDLTKAPLLRVGLFKLAAKRHLFLLDMHHIISDGVSAGIIMEEFSKLYRGEELPALSVHYKDFAVWQSELFQSDVYTEHENYWLNAFSGDIPVLNLPADFSRPLTQSFEGDCVSFQADKALLDDLHKLAQESQSTLFMVLLAAYNVLLAKYSGQEDIVVGTPIAGRSHADIENVLGMFVNTLALRNYPVETKHFQAFLEEVKQNTLQAYAHQDYPFEALVEKLDIQRDLSRNPLFDTMFILQNLDQKAYELDGLKLEAYPAQAGNAKFDLTLEAHEDETGIHFALVYSTKLFQRESIERMAGHFLQVLRQVVADQATALREISLLSEEERRIVTVDFNNTFAAYPRDLTIQELFEQQAAKTPEHAAVVMDGQMLTYRELNEKANQLAHVLRQNGVGKESIVGLLADRSLEMITGIMGILKAGGAYLGLDPEHPSERLAYMLEDGGVKVVLVQKHLLPLVGEGLMPIVLEEESLRPEDCGNPAIVNGASDLAYVMYTSGSTGKPKGVMVEHRNVTRLVMHTNYVQVRESDRMIQTGAIGFDAMTFEIFGALLHGASLYLVSKDVLLDAEKLGDFLRTNQITTMWLTSPLFNQLSQDNPAMFDSLRALIVGGEALSPKHINRVKSALPDLEIWNGYGPTENTTFSTCYLIEQHFEEQIPIGKPIANSTAYIVDGNNQPQPIGVPGELCVGGDGVARGYVNKPELTAEKFVPNPFAPGETMYRTGDLARWLPDGTIEYLGRIDQQVKIRGYRIELGEIETVLSQQAQVKEAVVAVIEEANGQKALCAYFVPEQAVDAAELREAMSKQLPGYMVPAYYVQMEKLPLTANGKVDRRALPQPSGERTTGSAFVAAQNDTEAKLQQIWQEVLGIPAIGIHDNFFEIGGHSLKAMNVITQVHKTFQVELPLKALFATPTIHELAAHIAESAFEQFETIQPVEPAAFYPVSFAQKRMYILHQFEGSGISYNVPSVLVLEGKLDYDRFAAAIQSLVKRHESLRTSFHSVNGEPLQRVHPDVELPVRLLEATEDQSESLIQELIQPFDLEIAPLFRVNLIKLGAERHLFFMDMHHIISDGVSLAVIVEEIASLYAGKQLSDLRIQYKDFAVWQTKLAQSDRFQKQEDFWTRTFAGEIPLLNLPHDYPRPSVQSFDGDTVALGTGHHLLEQLRKLAAETGTTLFMVLLAAYHVLLSKYAGQEEIVVGTPIAGRSHADVERIVGMFVNTLALKNTAAGSLSFRAFLEDVKQNALHAFEHQDYPFEHLVEKLQVRRDLSRNPLFDTMFSLGLAESAEGEVADLKVSPYPVNGHIAKFDLSLDAMEKQDGLLVQFSYCTKLFAKETVDRLAAHYVQLLQTITADPDIELARISVLSKAETEHMLHSFLATKTAYPTDKTFQKLFEEQVEKTPNEIAVLFGNEQLTYQELNAKANQLARVLRRKGVKPESTVGILVDRSLYMVIGMLAVLKAGGTFVPIDPDYPLERQAFMLEDSEAKLLLTLQKMNSQVAFPYETFYLDTETVDQEETGNLEHVAQPENVAYIIYTSGTTGKPKGVVIEHRSYANVAFAWKDEYHLDSFPVRLLQMASFAFDVSTGDFARALLTGGQLVICPNGVKMDPASLYETIRRHEITIFEATPALIMPLMHYVYENELDMSQMKLLILGADSCPAEDFKTLLARFGQKMRIINSYGVTEACIDTSYYEETDVTAIRSGTVPIGKPLPNMTMYVVDAHLNLQPVGVVGELCIGGAGVARGYLNRPELTEEKFVPNPFAPGERLYRTGDLAKWRADGNVEFLGRNDHQVKIRGVRIELGEIETQLRKLDGITEAVVVAREDRGQEKELCAYVVADHKLDTAELRANLLKELPQAMIPAYFVTLDALPLTANGKVDRRSLPAPDVTMLRTTEYVAPRSVWEARLAQVWEQVLNVPQVGALDDFFALGGHSLRAMRVLSSMHNEYQVDIPLRILFEKPTIQELAAFIEETAKGNVFSIEPVQKQAYYPVSSAQKRMYILDQFEGVGISYNMPSTMLIEGKLERTRVEAAFQRLIARHESLRTSFAVVNGEPVQNIHEDVPFALAYSEVTEQEARELVSSLVQPFDLEVAPLIRVSLLKIGEDRYVLFTDMHHSISDGVSSGILLAEWVQLYQGDVLPELRIQYKDFAVWQQEFSQSAAFHKQEAYWLQTFADDIPVLNLPTDFTRPSTQSFAGDQCTIGAGKALTEGLHQLAQATGTTLYMVLLAAYNVLLAKYAGQEDIIVGTPITGRSHADLEPIVGMFVNTLAMRNKPQREKTFSEFLQEVKQNALDAYGHQDYPFEELVEKLAIARDLSRNPLFDTVFTFQNSTEEVMTLPECTLAPFMTDETGQHAKFDLTFSATEEREEMTIGVEYSTSLFTRETMERFSRHFLTIAASIVQNPHIRLGEIDMLLPEEKQQILAGFNDTAVSYALDKTLHQLFEEQVDKTPDQAALLFSEQSLTYSELNERANRLARVLRAKGVGPDRLVAIMAERSPEMVIGILGILKAGGAYVPVDPGYPQERIQYLLEDSNAALLLSQAHLLPLLAQVSSELPECLDLNAELDAGLSGSNLPAVNQPTDLAYVIYTSGTTGKPKGVMIPHQGIVNCLQWRRDEYGFGPSDKALQVFSFAFDGFVASLFAPLLGGATCVLPQEAAAKDPVALKKLMAATEVTHYYGVPSLFQAILDCSTTTDFNQLRCVTLGGEKLPVQLVQKTKEKHPAIEINNEYGPTENSVVTTISRSIEAGQAITIGRPLANVQVYIVDEQHHLQPIGVVGELCIGGAGLARGYLNKPELTAEKFVANPFRPGERMYKTGDLVKWRTDGTIEYIGRADEQVKVRGYRIEIGEIESAVLAYQGIDQAVVVARDDDATAGSYLCAYFVAATAVSVSGLRSHLAKELPAYMIPSYFVELDQLPLSANGKVDRKALPKPQQSDATTREYVAPRNATEQQLAAIWQEVLGVEPIGITDQFFELGGHSLKATLLIAKVYEYMQIELPLNLIFQYPTIEKVADFITHKRFESRYGTAILLNQETARNVFCFTPIGAQSVYYQKLAAEIQGVSLYSFDFIQDDNRMEQYIAAITAIDPSGPYTLMGYSSGGNLAFEVAKELEERGYGVTDIILFDSYWKDKAIERTVAETENDIAQLFAEIGENTEMFNMTQEDFQLYAANEFVKQSFVRKTVSYVMFHNNLVNTGMTTAAIHLIQSELEADEEAPVAAKWNESAWANATQRLLTYSGHGIHSRMLAGDYASQNASILQNILQELFILK.

Positions 466 to 1038 (IFELIAEQAS…VAELARFLSR (573 aa)) are domain 1 (asparagine-activating). Carrier domains lie at 965-1040 (APQN…SRSE), 2002-2077 (APRN…AAAR), 3040-3115 (APTN…ATSG), 4075-4150 (AAQN…AESA), 5119-5194 (APRS…EETA), and 6162-6237 (APRN…THKR). 6 positions are modified to O-(pantetheine 4'-phosphoryl)serine: Ser1000, Ser2037, Ser3075, Ser4110, Ser5154, and Ser6197. The tract at residues 1521 to 2070 (YEEYALTYRE…FESPTIAGLA (550 aa)) is domain 2 (glutamine-activating). The segment at 2536 to 3113 (NKTLQALFEE…IKALAQYVAT (578 aa)) is domain 3 (tyrosine-activating). Residues 3590-4149 (EHAAVVMDGQ…HELAAHIAES (560 aa)) form a domain 4 (valine-activating) region. The segment at 4606–5203 (YPTDKTFQKL…AKGNVFSIEP (598 aa)) is domain 5 (ornithine-activating). The segment at 5658-6245 (LHQLFEEQVD…KRFESRYGTA (588 aa)) is domain 6 (leucine-activating).

Belongs to the ATP-dependent AMP-binding enzyme family. In terms of assembly, large multienzyme complex of TycA, TycB and TycC. Pantetheine 4'-phosphate is required as a cofactor.

The protein operates within antibiotic biosynthesis; tyrocidine biosynthesis. In terms of biological role, incorporates six amino acids (for tyrocidine A, Asn, Gln, Tyr, Val, Orn, and Leu) in their L-configuration into the peptide product. The chain is Tyrocidine synthase 3 (tycC) from Brevibacillus parabrevis.